Consider the following 207-residue polypeptide: Elongation factor 1-beta (207 aa).

Alanine 2 is subject to N-acetylalanine. The tract at residues 70–96 is disordered; the sequence is FPGIPTSASKEEDDDVDLFGSDEEDEE. Over residues 80–96 the composition is skewed to acidic residues; that stretch reads EEDDDVDLFGSDEEDEE. Residue serine 90 is modified to Phosphoserine; by CK2.

Belongs to the EF-1-beta/EF-1-delta family. EF-1 is composed of 4 subunits: alpha, beta, delta, and gamma. In terms of processing, phosphorylation affects the GDP/GTP exchange rate.

In terms of biological role, EF-1-beta and EF-1-delta stimulate the exchange of GDP bound to EF-1-alpha to GTP. In Artemia salina (Brine shrimp), this protein is Elongation factor 1-beta.